We begin with the raw amino-acid sequence, 812 residues long: Ras guanine nucleotide exchange factor J (812 aa).

Composition is skewed to low complexity over residues 1–36 (MSNP…NSKS) and 53–65 (LLNR…NLNN). Positions 1–146 (MSNPVSINNS…GGSSGGLNMS (146 aa)) are disordered. Positions 75–86 (SFTSNYQNIYTP) are enriched in polar residues. Over residues 87–101 (NNNSYNSSNNNNNNN) the composition is skewed to low complexity. Over residues 131 to 141 (NSGGGGGGSSG) the composition is skewed to gly residues. Residues 214 to 246 (GRDTMLQLILQHLQFEGLMDSRKLLEEEARVQY) enclose the LisH domain. Residues 320–382 (IIYVDDKEKE…NNSIGNSNSY (63 aa)) form a disordered region. A compositionally biased stretch (basic and acidic residues) spans 323 to 343 (VDDKEKEKEKEKEKEKEKDKF). Residues 344 to 382 (GPNSTNSLSGSGSSPNIPSGMNNNSSSIGNNSIGNSNSY) are compositionally biased toward low complexity. The 127-residue stretch at 409-535 (NKPQVKAASL…LSESLNAKIK (127 aa)) folds into the N-terminal Ras-GEF domain. The Ras-GEF domain occupies 573–804 (DEEEIARQLT…YSRSMSFEPR (232 aa)).

Promotes the exchange of Ras-bound GDP by GTP. The chain is Ras guanine nucleotide exchange factor J (gefJ) from Dictyostelium discoideum (Social amoeba).